The sequence spans 252 residues: Hydroxyacylglutathione hydrolase (252 aa).

Zn(2+) is bound by residues His54, His56, Asp58, His59, His113, Asp132, and His170.

The protein belongs to the metallo-beta-lactamase superfamily. Glyoxalase II family. As to quaternary structure, monomer. Requires Zn(2+) as cofactor.

It carries out the reaction an S-(2-hydroxyacyl)glutathione + H2O = a 2-hydroxy carboxylate + glutathione + H(+). It functions in the pathway secondary metabolite metabolism; methylglyoxal degradation; (R)-lactate from methylglyoxal: step 2/2. Its function is as follows. Thiolesterase that catalyzes the hydrolysis of S-D-lactoyl-glutathione to form glutathione and D-lactic acid. The sequence is that of Hydroxyacylglutathione hydrolase from Synechococcus sp. (strain JA-3-3Ab) (Cyanobacteria bacterium Yellowstone A-Prime).